The primary structure comprises 183 residues: Capsid protein (183 aa).

Residues Leu143–Cys183 are disordered. The span at Val149–Ser176 shows a compositional bias: basic residues. Phosphoserine; by host occurs at positions 155, 162, and 170. Residues Ser155–Pro161 form a 1; half-length repeat. Residues Ser155–Gln177 form a 3 X 8 AA repeats of S-P-R-R-R-[PR]-S-Q region. Residues Arg158–Arg175 carry the Bipartite nuclear localization signal motif. A run of 2 repeats spans residues Ser162 to Gln169 and Ser170 to Gln177. The segment at Gln177–Cys183 is RNA binding.

This sequence belongs to the orthohepadnavirus core antigen family. In terms of assembly, homodimerizes, then multimerizes. Interacts with cytosol exposed regions of viral L glycoprotein present in the reticulum-to-Golgi compartment. Interacts with human FLNB. Phosphorylated form interacts with host importin alpha; this interaction depends on the exposure of the NLS, which itself depends upon genome maturation and/or phosphorylation of the capsid protein. Interacts with host NUP153. In terms of processing, phosphorylated by host SRPK1, SRPK2, and maybe protein kinase C or GAPDH. Phosphorylation is critical for pregenomic RNA packaging. Protein kinase C phosphorylation is stimulated by HBx protein and may play a role in transport of the viral genome to the nucleus at the late step during the viral replication cycle.

The protein resides in the virion. It is found in the host cytoplasm. Its function is as follows. Self assembles to form an icosahedral capsid. Most capsids appear to be large particles with an icosahedral symmetry of T=4 and consist of 240 copies of capsid protein, though a fraction forms smaller T=3 particles consisting of 180 capsid proteins. Entering capsids are transported along microtubules to the nucleus. Phosphorylation of the capsid is thought to induce exposure of nuclear localization signal in the C-terminal portion of the capsid protein that allows binding to the nuclear pore complex via the importin (karyopherin-) alpha and beta. Capsids are imported in intact form through the nuclear pore into the nuclear basket, where it probably binds NUP153. Only capsids that contain the mature viral genome can release the viral DNA and capsid protein into the nucleoplasm. Immature capsids get stuck in the basket. Capsids encapsulate the pre-genomic RNA and the P protein. Pre-genomic RNA is reverse-transcribed into DNA while the capsid is still in the cytoplasm. The capsid can then either be directed to the nucleus, providing more genomes for transcription, or bud through the endoplasmic reticulum to provide new virions. The polypeptide is Capsid protein (Homo sapiens (Human)).